A 168-amino-acid chain; its full sequence is MISDILAPGLRVVFCGINPGKSSAHTGFHFAHPGNRFWKVIHQAGFTDRQLRPEEELQLLDTRCGITMLVERPTVQASEVALQELRSGGRELVRKIEEYQPQALAVLGKQAFELAFNQRGAKWGKQAITIGTTQVWVLPNPSGLNRATLDKLVAAYRELDDALATRGQ.

This sequence belongs to the uracil-DNA glycosylase (UDG) superfamily. TDG/mug family. As to quaternary structure, binds DNA as a monomer.

Its subcellular location is the cytoplasm. It carries out the reaction Specifically hydrolyzes mismatched double-stranded DNA and polynucleotides, releasing free uracil.. Its function is as follows. Excises ethenocytosine and uracil, which can arise by alkylation or deamination of cytosine, respectively, from the corresponding mispairs with guanine in ds-DNA. It is capable of hydrolyzing the carbon-nitrogen bond between the sugar-phosphate backbone of the DNA and the mispaired base. The complementary strand guanine functions in substrate recognition. Required for DNA damage lesion repair in stationary-phase cells. In Klebsiella pneumoniae (strain 342), this protein is G/U mismatch-specific DNA glycosylase.